The following is a 149-amino-acid chain: Secreted RxLR effector protein 3 (149 aa).

Positions 1 to 23 (MRASTILFVLGAAILAVIGVTTA) are cleaved as a signal peptide. Positions 38–53 (RLLRSGSMEQEPDEER) match the RxLR-dEER motif.

This sequence belongs to the RxLR effector family.

The protein localises to the secreted. It is found in the host nucleus. The protein resides in the host cytoplasm. Functionally, secreted effector that completely suppresses the host cell death induced by cell death-inducing proteins. This chain is Secreted RxLR effector protein 3, found in Plasmopara viticola (Downy mildew of grapevine).